The chain runs to 334 residues: MGNEFDKILKIIQKDIPLVKEPFSVLAQEVGIEEGKLLKTIEKLVEDGIVRHIAPIYDSRLLGYDSALIAFKVDRQKLEEVANFVNACPGVSHNYERTHDFNLWFTLAVPPEISELEDVVRLMAERERVKDYLVLRVVRLFKIGVKLDYESPAEKESVDTKVYTYTPLTEEEKRIVSITQGSFPLVERPFLEYAKRLRMSEEELLEKLSALKERGVLRRISAVLYHRRAGYVANAMSVWEVPEDAIEEVGRYIAGFKGVSHCYQRTTSEKFRYNLFAMMHGKGQEEIKLLAETISREKALSKYALLFSTREFKKVRIKYFSEEFERWFKELISA.

H93 is an active-site residue.

The protein belongs to the Ahb/Nir family.

The enzyme catalyses siroheme + 2 H(+) = 12,18-didecarboxysiroheme + 2 CO2. The protein operates within porphyrin-containing compound metabolism. In terms of biological role, involved in heme d1 biosynthesis. Catalyzes the decarboxylation of siroheme into didecarboxysiroheme. Siroheme is probably decarboxylated to monodecarboxysiroheme, which is in turn decarboxylated to didecarboxysiroheme. This is Siroheme decarboxylase from Hydrogenobacter thermophilus (strain DSM 6534 / IAM 12695 / TK-6).